The chain runs to 185 residues: Ribosome hibernation promotion factor (185 aa).

The interval 1 to 125 (MIKFNIRGEN…PLDTTDEVAE (125 aa)) is probably still associates with ribosome. The segment at 126–185 (DHVDIVRTKHVALKPMDAEEAVLQMDMLGHDFYVFTDADSNGTHVVYRRTDGRYGLIETE) is required but not sufficient to restore ribosome dimerization, in vitro will replace E.coli RMF in ribosome dimerization.

It belongs to the HPF/YfiA ribosome-associated protein family. Long HPF subfamily. Interacts with 100S ribosomes in stationary phase; alters the relative position of the 30S and 50S subunits.

The protein resides in the cytoplasm. Its function is as follows. Required for dimerization of active 70S ribosomes into 100S ribosomes in stationary phase; 100S ribosomes are translationally inactive and sometimes present during exponential growth. Able to dimerize E.coli 70S ribosomes in vitro. This chain is Ribosome hibernation promotion factor, found in Lactococcus lactis subsp. cremoris (strain MG1363).